Consider the following 363-residue polypeptide: Ribosome-binding ATPase YchF (363 aa).

The 254-residue stretch at 3 to 256 folds into the OBG-type G domain; it reads FKCGIVGLPN…LDDDEKIEFL (254 aa). Residue 12–17 coordinates ATP; the sequence is NVGKST. 2 residues coordinate Mg(2+): S16 and T36. In terms of domain architecture, TGS spans 278–361; the sequence is NLQTYFTAGV…QDGDVMHFRF (84 aa).

This sequence belongs to the TRAFAC class OBG-HflX-like GTPase superfamily. OBG GTPase family. YchF/OLA1 subfamily. Mg(2+) is required as a cofactor.

In terms of biological role, ATPase that binds to both the 70S ribosome and the 50S ribosomal subunit in a nucleotide-independent manner. The polypeptide is Ribosome-binding ATPase YchF (Pasteurella multocida (strain Pm70)).